The sequence spans 2160 residues: MAYFLPSFFQKRLLRYALSRLELVDTEALDLDSLGIRWGQRSTVELRDIGLRLELPASSELLSAKVQFLKITVPADIYSSGIICEASGINVHLQLPSEESFSTAKDGNPNSRSPSKAGTHDSSSDHILPTPADLAESFLDAEPKEEKEELQAAITSRSQMLQRTSASISDDEEELGLGNEGVSLPSFVAAFLKGVAERLQVRVDNVSIRVDMEMKQEGVVKREPENKPDNVTGLLTVREVSVGAVSSATSSSEQEKLFRNRPIVISDINMALISEPIVFSNYSRFAPPASPTTPVQPKSSEPSSRIPSPLPGHTPDADSFLAMTRSTILETQQEHWIQDIEEPGVGRMEGSAYTYDGRFSDADTDAEDRSDGYLEGAQQFLDNDKLLDNPAYLDSVIDSQLHDDDLEPPEDLVPQDDQFPPSSATPRPPKPEVHMYRETSPSGIDTEQTAPFSHYGDGFFMDRSPHGSQPYLGPDHVATRNASHSASSPSGSLPSREISNRQTAPPSESGSIGSSDFANGGELSESKLFSTEEAQSMYMSAISHGSSRSFVPNVPGAWDLWESTVAQDMHAGTQLTDAADAKQDVQDETSISTPKLTAQAASAFTEKRSFGEQSECLSEAREPDLAPLSPTLSKLSDVAKRFLRIDRISISIPVGEDRRHTDETVHSSDLNLASDSPKDSTVHSGHSSAESEFLSSTMYASARLRSDSINLAPSFEGTLPRSLPRQGKKADHDPISKSQPGDIAVEISAVDIRFDNAVGWLVVKIGQRVLHAFRDGGNVSSGKPAPESVQTRHSLALTLHDFSIKYVDHIPGQTYALNDYDPHSSSFFGLPHEDIILRAEASGLTARYLADKSATKFSLDVSKFVFGFAWDDLISFSESLKMRESTRDVLAPVNGDISLSLTKSSDSASLTITTLPLRLHLNVQRLEEIFGRVGGLSTILELGSSISSASTGFSTAKNMQRDSPRRARGVHFESSPPPENILPANPQLSWKVNARVGGIVFDVVGETHYLRLKTTAVKVVSRFEGIGVQIDKAKLSGPLPLDDSRDAPAKINLSNIRVEFLYSPKEPDLDRLLAIITPSKDKYDEDDDIMLDTLFRQRRQGSVLRTTVADAKIIISRTSDLESLSQLEEELGKLSTVAKYLPEDDRPGILTLTLIRELECQVYLGGPVGNITTHLRNAEAAYISMPSLIAAQLGTIKVVRNGSEELVGEALPASGSQGQNQSQLPILMARYIADEMDPTIKIKSHNLRVEYTIPSIIAFLGLSEDQTTGDVAANMANSLANIAESQHLHRNASETSIGSKGRQASAKPRKLAFALRDCVLALNPRCTTAKGLVVLTNAKFSAAISDSGCSEAMLDLKKASIMVIDDVKNMGLAENLQRGRSTIPQSDQIQSFIDMGFVPVSSISSAMATVKLLQLDDDGTKSVDVELKDDLLILETCADSTQTLISIINGLQPPTPPSVAVKYRTEVLPIEDMLASFSGDAFAMDPPPGQAEITEAPTIVEPEDGGPRIEDELEYVSDFYPVKSGPDNLAPTGSAVPSESNELLDSFHSQYYVSSSVSDLEFKEDHFANHSAVGGTAHRWDSTQNTYGLTDDSKIRKSPLRIRVRDAHIIWNLFDGYDWQRTRDTISKAVKDVEKRATERRARAGSRASPGFEEEEESVIGDCLFNSIYIGIPANKDPRELRNDINRNIDDLVSETGSYATTTTVTGATARQAQSPSYRGRRLKLSRSKYHKMTFELKGICADFVVFPPGSEETQSSLDVRVNDLEIFDHVPTSTWKKFATYMHEAGERESGASMVHLEMLTVRPVPELAASELVLKATLLPLRLHVDQDALDFICRFFEFRDDTAPTPSSPADIPFLQRVEVNAVPVKLDFKPKRVDYAGLRSGRTTEFMNFFVLDGADMVMRHVIIYGVSGFDKLGQTLNDIWMPDIKRNQLPGVLAGLAPIRSLVNVGGGVKDLVVVPMREYRKDGRIVRSIQKGALAFAKTTSNELVKLGAKLAIGTQTVLQGAEEMLTAPTATTLGSEEDMIDEEEANKISPYADQPVGVVQGLRGAFRGLERDLLLARDAIVAVPGEIVESGSAKAAAKAVLKRAPTVILRPAIGVSKAVGQTLLGAGNTLDPSNRRKIEDVSVMVKYVSRVCLLTSLLRNINAIKTVGHIGQL.

Polar residues-rich tracts occupy residues 100-116 (SFST…SPSK), 153-168 (AITS…SASI), and 292-306 (TTPV…SSRI). Disordered stretches follow at residues 100–130 (SFST…ILPT), 142–174 (EPKE…DEEE), 288–317 (PASP…TPDA), 347–371 (RMEG…DRSD), 401–519 (LHDD…DFAN), 657–689 (DRRH…HSSA), 715–739 (FEGT…SKSQ), and 953–978 (FSTA…SPPP). Residues 404–414 (DDLEPPEDLVP) show a composition bias toward acidic residues. The span at 415–425 (QDDQFPPSSAT) shows a compositional bias: low complexity. Positions 439–451 (TSPSGIDTEQTAP) are enriched in polar residues. Over residues 483 to 497 (SHSASSPSGSLPSRE) the composition is skewed to low complexity. Over residues 500-517 (NRQTAPPSESGSIGSSDF) the composition is skewed to polar residues. Over residues 657 to 666 (DRRHTDETVH) the composition is skewed to basic and acidic residues.

This sequence belongs to the ATG2 family.

Its subcellular location is the preautophagosomal structure membrane. It localises to the endoplasmic reticulum membrane. It catalyses the reaction a 1,2-diacyl-sn-glycero-3-phosphocholine(in) = a 1,2-diacyl-sn-glycero-3-phosphocholine(out). The enzyme catalyses a 1,2-diacyl-sn-glycero-3-phospho-L-serine(in) = a 1,2-diacyl-sn-glycero-3-phospho-L-serine(out). The catalysed reaction is a 1,2-diacyl-sn-glycero-3-phosphoethanolamine(in) = a 1,2-diacyl-sn-glycero-3-phosphoethanolamine(out). In terms of biological role, lipid transfer protein required for autophagosome completion and peroxisome degradation. Tethers the edge of the isolation membrane (IM) to the endoplasmic reticulum (ER) and mediates direct lipid transfer from ER to IM for IM expansion. Atg2 binds to the ER exit site (ERES), which is the membrane source for autophagosome formation, using basic residues in its N-terminal region (NR) and to the expanding edge of the IM through its C-terminal region. The latter binding is assisted by an atg18-PtdIns3P interaction. Atg2 then extracts phospholipids from the membrane source using its NR and transfers them to atg9 to the IM through its predicted beta-sheet-rich structure for membrane expansion. This chain is Autophagy-related protein 2 (atg2), found in Aspergillus fumigatus (strain ATCC MYA-4609 / CBS 101355 / FGSC A1100 / Af293) (Neosartorya fumigata).